Consider the following 89-residue polypeptide: Small ribosomal subunit protein uS15 (89 aa).

The tract at residues 1–25 is disordered; that stretch reads MSLDTTEKQQLINTHQTHGTDTGSA. Residues 8–25 are compositionally biased toward polar residues; sequence KQQLINTHQTHGTDTGSA.

The protein belongs to the universal ribosomal protein uS15 family. As to quaternary structure, part of the 30S ribosomal subunit. Forms a bridge to the 50S subunit in the 70S ribosome, contacting the 23S rRNA.

Its function is as follows. One of the primary rRNA binding proteins, it binds directly to 16S rRNA where it helps nucleate assembly of the platform of the 30S subunit by binding and bridging several RNA helices of the 16S rRNA. Forms an intersubunit bridge (bridge B4) with the 23S rRNA of the 50S subunit in the ribosome. This Synechococcus sp. (strain CC9605) protein is Small ribosomal subunit protein uS15.